The following is a 211-amino-acid chain: ATP phosphoribosyltransferase (211 aa).

The protein belongs to the ATP phosphoribosyltransferase family. Short subfamily. In terms of assembly, heteromultimer composed of HisG and HisZ subunits.

The protein localises to the cytoplasm. It carries out the reaction 1-(5-phospho-beta-D-ribosyl)-ATP + diphosphate = 5-phospho-alpha-D-ribose 1-diphosphate + ATP. The protein operates within amino-acid biosynthesis; L-histidine biosynthesis; L-histidine from 5-phospho-alpha-D-ribose 1-diphosphate: step 1/9. In terms of biological role, catalyzes the condensation of ATP and 5-phosphoribose 1-diphosphate to form N'-(5'-phosphoribosyl)-ATP (PR-ATP). Has a crucial role in the pathway because the rate of histidine biosynthesis seems to be controlled primarily by regulation of HisG enzymatic activity. This is ATP phosphoribosyltransferase from Pseudomonas aeruginosa (strain UCBPP-PA14).